We begin with the raw amino-acid sequence, 300 residues long: Cis-3-alkyl-4-alkyloxetan-2-one decarboxylase (300 aa).

The 250-residue stretch at V33–D282 folds into the AB hydrolase-1 domain.

It belongs to the AB hydrolase superfamily. In terms of assembly, homotetramer. Forms a complex with OleC and OleD.

Its subcellular location is the cytoplasm. It carries out the reaction a cis-3-alkyl-4-alkyloxetan-2-one = a cis-alkene + CO2. Functionally, involved in olefin biosynthesis. Catalyzes the elimination of carbon dioxide from beta-lactones to form the final olefin product. This chain is Cis-3-alkyl-4-alkyloxetan-2-one decarboxylase, found in Xanthomonas campestris pv. campestris (strain ATCC 33913 / DSM 3586 / NCPPB 528 / LMG 568 / P 25).